A 231-amino-acid chain; its full sequence is NADH-ubiquinone oxidoreductase chain 4 (231 aa).

6 helical membrane passes run 1-21 (PIAG…YGII), 34-54 (LFLP…LTCL), 63-85 (IAYS…TPWG), 89-111 (AMAL…NTTY), 128-148 (ILPM…AIPP), and 156-176 (LLIM…LGLS).

This sequence belongs to the complex I subunit 4 family.

It is found in the mitochondrion membrane. It catalyses the reaction a ubiquinone + NADH + 5 H(+)(in) = a ubiquinol + NAD(+) + 4 H(+)(out). In terms of biological role, core subunit of the mitochondrial membrane respiratory chain NADH dehydrogenase (Complex I) that is believed to belong to the minimal assembly required for catalysis. Complex I functions in the transfer of electrons from NADH to the respiratory chain. The immediate electron acceptor for the enzyme is believed to be ubiquinone. The chain is NADH-ubiquinone oxidoreductase chain 4 (MT-ND4) from Crotalus concolor (Midget faded rattlesnake).